The chain runs to 154 residues: Transmembrane protein 35B (154 aa).

A signal peptide spans 1-22; sequence MALLLSVLRVLLGGFFALVGLA. 3 helical membrane passes run 63-83, 85-105, and 112-132; these read IAVGFLELLAGLLLVMGPPML, EISNLFLILLMMGAIFTLAAL, and CIPAIVCLGFLLLLNVGQLLA.

The protein belongs to the DoxX family.

The protein localises to the membrane. The polypeptide is Transmembrane protein 35B (Homo sapiens (Human)).